Here is a 458-residue protein sequence, read N- to C-terminus: tRNA modification GTPase MnmE (458 aa).

(6S)-5-formyl-5,6,7,8-tetrahydrofolate-binding residues include Arg-26, Glu-88, and Arg-127. The region spanning 224–378 (GLSTAIIGRP…IEDRINQLFF (155 aa)) is the TrmE-type G domain. K(+) is bound at residue Asn-234. Residues 234 to 239 (NVGKSS), 253 to 259 (TDIAGTT), and 278 to 281 (DTAG) each bind GTP. Ser-238 contributes to the Mg(2+) binding site. K(+) is bound by residues Thr-253, Ile-255, and Thr-258. Thr-259 is a binding site for Mg(2+). Lys-458 lines the (6S)-5-formyl-5,6,7,8-tetrahydrofolate pocket.

It belongs to the TRAFAC class TrmE-Era-EngA-EngB-Septin-like GTPase superfamily. TrmE GTPase family. Homodimer. Heterotetramer of two MnmE and two MnmG subunits. Requires K(+) as cofactor.

It localises to the cytoplasm. In terms of biological role, exhibits a very high intrinsic GTPase hydrolysis rate. Involved in the addition of a carboxymethylaminomethyl (cmnm) group at the wobble position (U34) of certain tRNAs, forming tRNA-cmnm(5)s(2)U34. The chain is tRNA modification GTPase MnmE from Streptococcus pyogenes serotype M4 (strain MGAS10750).